The following is a 349-amino-acid chain: 5-deoxyribose 1-phosphate isomerase (349 aa).

Substrate is bound by residues 49–51 (RGA), Arg92, and Gln199. The active-site Proton donor is the Asp240. Position 250 to 251 (250 to 251 (NK)) interacts with substrate.

This sequence belongs to the EIF-2B alpha/beta/delta subunits family. DrdI subfamily.

It catalyses the reaction 5-deoxy-alpha-D-ribose 1-phosphate = 5-deoxy-D-ribulose 1-phosphate. Its pathway is carbohydrate degradation. Its function is as follows. Catalyzes the isomerization of 5-deoxy-alpha-D-ribose 1-phosphate to 5-deoxy-D-ribulose 1-phosphate, as part of a 5-deoxyribose salvage pathway that recycles this toxic radical SAM enzyme by-product to mainstream metabolites. The protein is 5-deoxyribose 1-phosphate isomerase of Clostridium botulinum (strain 657 / Type Ba4).